An 89-amino-acid chain; its full sequence is Small ribosomal subunit protein uS15 (89 aa).

Residues 1–13 (MYLTSEKKEEIFS) show a composition bias toward basic and acidic residues. Positions 1 to 24 (MYLTSEKKEEIFSKHGKGKNDTGS) are disordered.

The protein belongs to the universal ribosomal protein uS15 family. Part of the 30S ribosomal subunit. Forms a bridge to the 50S subunit in the 70S ribosome, contacting the 23S rRNA.

In terms of biological role, one of the primary rRNA binding proteins, it binds directly to 16S rRNA where it helps nucleate assembly of the platform of the 30S subunit by binding and bridging several RNA helices of the 16S rRNA. Its function is as follows. Forms an intersubunit bridge (bridge B4) with the 23S rRNA of the 50S subunit in the ribosome. This chain is Small ribosomal subunit protein uS15, found in Christiangramia forsetii (strain DSM 17595 / CGMCC 1.15422 / KT0803) (Gramella forsetii).